The following is a 220-amino-acid chain: Probable septum site-determining protein MinC (220 aa).

This sequence belongs to the MinC family. As to quaternary structure, interacts with MinD and FtsZ.

Cell division inhibitor that blocks the formation of polar Z ring septums. Rapidly oscillates between the poles of the cell to destabilize FtsZ filaments that have formed before they mature into polar Z rings. Prevents FtsZ polymerization. This chain is Probable septum site-determining protein MinC, found in Vibrio parahaemolyticus serotype O3:K6 (strain RIMD 2210633).